Consider the following 173-residue polypeptide: Photosystem I assembly protein Ycf3 (173 aa).

TPR repeat units follow at residues 36–69 (AFAYYRDGMAAQSEGEYAEALENYREALALEQDD), 73–106 (SYILYNMGLIYQSNGELDKALEYYHQALELNPRL), and 121–154 (GEQSLQAGDEETAEALFDEAAQYWIRAIRIAPNN).

The protein belongs to the Ycf3 family.

Its subcellular location is the cellular thylakoid membrane. In terms of biological role, essential for the assembly of the photosystem I (PSI) complex. May act as a chaperone-like factor to guide the assembly of the PSI subunits. The protein is Photosystem I assembly protein Ycf3 of Synechococcus sp. (strain JA-3-3Ab) (Cyanobacteria bacterium Yellowstone A-Prime).